The following is a 1113-amino-acid chain: Coiled-coil domain-containing protein 158 (1113 aa).

Over residues M1–L14 the composition is skewed to polar residues. Positions M1–S26 are disordered. Residues S15–S26 are compositionally biased toward low complexity. Coiled-coil stretches lie at residues G72 to E183 and V243 to E833. Disordered stretches follow at residues L848–R902 and C955–T1062. Composition is skewed to polar residues over residues A867–N894, C955–T974, F994–K1017, L1024–R1040, and D1053–T1062. Residues T1061–K1113 adopt a coiled-coil conformation.

The protein is Coiled-coil domain-containing protein 158 (CCDC158) of Homo sapiens (Human).